A 593-amino-acid polypeptide reads, in one-letter code: NADH-quinone oxidoreductase subunit C/D (593 aa).

Residues 1-184 form an NADH dehydrogenase I subunit C region; it reads MTADNALYIP…DPYSLTLAKQ (184 aa). The tract at residues 208-593 is NADH dehydrogenase I subunit D; sequence DYMFLNLGPN…IDFVMADVDR (386 aa).

The protein in the N-terminal section; belongs to the complex I 30 kDa subunit family. This sequence in the C-terminal section; belongs to the complex I 49 kDa subunit family. As to quaternary structure, NDH-1 is composed of 13 different subunits. Subunits NuoB, CD, E, F, and G constitute the peripheral sector of the complex.

The protein resides in the cell inner membrane. The catalysed reaction is a quinone + NADH + 5 H(+)(in) = a quinol + NAD(+) + 4 H(+)(out). Its function is as follows. NDH-1 shuttles electrons from NADH, via FMN and iron-sulfur (Fe-S) centers, to quinones in the respiratory chain. The immediate electron acceptor for the enzyme in this species is believed to be ubiquinone. Couples the redox reaction to proton translocation (for every two electrons transferred, four hydrogen ions are translocated across the cytoplasmic membrane), and thus conserves the redox energy in a proton gradient. This Pseudomonas syringae pv. tomato (strain ATCC BAA-871 / DC3000) protein is NADH-quinone oxidoreductase subunit C/D.